Reading from the N-terminus, the 1104-residue chain is Mitogen-activated protein kinase kinase kinase 9 (1104 aa).

A compositionally biased stretch (low complexity) spans 12-22 (ASAAAAAPPGE). Residues 12–47 (ASAAAAAPPGEDGAGAGAEEEEEEEEEAAAAVGPGE) are disordered. The segment covering 29–39 (AEEEEEEEEEA) has biased composition (acidic residues). The region spanning 52 to 116 (APLPYWTAVF…PSNYVTPRSA (65 aa)) is the SH3 domain. The Protein kinase domain maps to 144 to 412 (LTLEEIIGIG…LTTIEESGFF (269 aa)). ATP-binding positions include 150–158 (IGIGGFGKV) and K171. D268 acts as the Proton acceptor in catalysis. Phosphothreonine; by autocatalysis is present on residues T304 and T305. Phosphoserine; by autocatalysis is present on S308. Position 312 is a phosphothreonine; by autocatalysis (T312). Leucine-zipper stretches follow at residues 430–451 (IQEM…EEEL) and 465–486 (LRRR…ELNI). 4 disordered regions span residues 532–636 (ASPT…PHFH), 675–742 (MEDE…LKRG), 781–819 (EEPE…FKKE), and 890–1038 (RDPN…CFAS). A Phosphoserine modification is found at S533. 2 stretches are compositionally biased toward polar residues: residues 566–575 (PGESSKTWGR) and 723–739 (PVNS…TNSL). A compositionally biased stretch (basic and acidic residues) spans 785–797 (PPAREEKKRREGL). Positions 893 to 910 (NQSLTPTHVTLTTPSQPS) are enriched in polar residues. Over residues 929 to 944 (SRSPSSNGLSPSPGAG) the composition is skewed to low complexity. Residues 1014 to 1038 (HARSTSPANSSSTETPSNLDSCFAS) are compositionally biased toward polar residues.

The protein belongs to the protein kinase superfamily. STE Ser/Thr protein kinase family. MAP kinase kinase kinase subfamily. Homodimer. Mg(2+) is required as a cofactor. Autophosphorylation on serine and threonine residues within the activation loop plays a role in enzyme activation. Thr-312 is likely to be the main autophosphorylation site. Autophosphorylation also occurs on Thr-304 and Ser-308. As to expression, expressed in epithelial tumor cell lines of colonic, breast and esophageal origin.

The enzyme catalyses L-seryl-[protein] + ATP = O-phospho-L-seryl-[protein] + ADP + H(+). It carries out the reaction L-threonyl-[protein] + ATP = O-phospho-L-threonyl-[protein] + ADP + H(+). Its activity is regulated as follows. Homodimerization via the leucine zipper domains is required for autophosphorylation of multiple sites in the activation loop and subsequent activation. Autophosphorylation at Thr-312 is the key step in activation of MAP3K9/MLK1 and is required for full phosphorylation. Autophosphorylation at Thr-304 and Ser-308 have been shown to be of secondary importance in the activation of MAP3K9/MLK1. CEP-1347 and many indolocarbazole analogs have been shown to act as inhibitors of MAP3K9/MLK1 activity. Serine/threonine kinase which acts as an essential component of the MAP kinase signal transduction pathway. Plays an important role in the cascades of cellular responses evoked by changes in the environment. Once activated, acts as an upstream activator of the MKK/JNK signal transduction cascade through the phosphorylation of MAP2K4/MKK4 and MAP2K7/MKK7 which in turn activate the JNKs. The MKK/JNK signaling pathway regulates stress response via activator protein-1 (JUN) and GATA4 transcription factors. Also plays a role in mitochondrial death signaling pathway, including the release cytochrome c, leading to apoptosis. The polypeptide is Mitogen-activated protein kinase kinase kinase 9 (MAP3K9) (Homo sapiens (Human)).